Reading from the N-terminus, the 286-residue chain is Pantothenate synthetase (286 aa).

30–37 (MGNLHDGH) provides a ligand contact to ATP. H37 serves as the catalytic Proton donor. Q61 is a binding site for (R)-pantoate. A beta-alanine-binding site is contributed by Q61. 149 to 152 (GEKD) is an ATP binding site. (R)-pantoate is bound at residue Q155. Residues V178 and 186–189 (LSSR) contribute to the ATP site.

The protein belongs to the pantothenate synthetase family. As to quaternary structure, homodimer.

The protein localises to the cytoplasm. The catalysed reaction is (R)-pantoate + beta-alanine + ATP = (R)-pantothenate + AMP + diphosphate + H(+). It functions in the pathway cofactor biosynthesis; (R)-pantothenate biosynthesis; (R)-pantothenate from (R)-pantoate and beta-alanine: step 1/1. Functionally, catalyzes the condensation of pantoate with beta-alanine in an ATP-dependent reaction via a pantoyl-adenylate intermediate. The protein is Pantothenate synthetase of Edwardsiella ictaluri (strain 93-146).